The chain runs to 296 residues: Giardin subunit alpha-4 (296 aa).

4 Annexin repeats span residues 3-72 (ATVS…VHAW), 74-146 (SRFE…GWVK), 153-223 (KSIK…AHHW), and 226-294 (DPGQ…VFWR).

This sequence belongs to the annexin family. Giardin subunit alpha subfamily.

It is found in the cytoplasm. The protein resides in the cytoskeleton. Functionally, giardins are involved in parasite attachment to the intestinal mucosa and in the cytoskeletal disassembly and reassembly that marks the transition from infectious trophozoite to transmissible cyst. They may interact with other cytoskeletal proteins such as microtubules in the microribbons or crossbridges, to maintain the integrity of the ventral disk. This chain is Giardin subunit alpha-4, found in Giardia intestinalis (Giardia lamblia).